Consider the following 325-residue polypeptide: Tetraacyldisaccharide 4'-kinase (325 aa).

Residue 55-62 (TAGGNGKT) participates in ATP binding.

The protein belongs to the LpxK family.

The enzyme catalyses a lipid A disaccharide + ATP = a lipid IVA + ADP + H(+). It participates in glycolipid biosynthesis; lipid IV(A) biosynthesis; lipid IV(A) from (3R)-3-hydroxytetradecanoyl-[acyl-carrier-protein] and UDP-N-acetyl-alpha-D-glucosamine: step 6/6. In terms of biological role, transfers the gamma-phosphate of ATP to the 4'-position of a tetraacyldisaccharide 1-phosphate intermediate (termed DS-1-P) to form tetraacyldisaccharide 1,4'-bis-phosphate (lipid IVA). The protein is Tetraacyldisaccharide 4'-kinase of Salmonella newport (strain SL254).